The sequence spans 363 residues: 3-dehydroquinate synthase (363 aa).

NAD(+) contacts are provided by residues 72-77 (SGEQSK), 106-110 (GVIGD), 130-131 (TT), Lys142, and Lys151. Zn(2+)-binding residues include Glu184, His246, and His263.

The protein belongs to the sugar phosphate cyclases superfamily. Dehydroquinate synthase family. Co(2+) serves as cofactor. Zn(2+) is required as a cofactor. The cofactor is NAD(+).

It is found in the cytoplasm. It catalyses the reaction 7-phospho-2-dehydro-3-deoxy-D-arabino-heptonate = 3-dehydroquinate + phosphate. Its pathway is metabolic intermediate biosynthesis; chorismate biosynthesis; chorismate from D-erythrose 4-phosphate and phosphoenolpyruvate: step 2/7. Catalyzes the conversion of 3-deoxy-D-arabino-heptulosonate 7-phosphate (DAHP) to dehydroquinate (DHQ). This chain is 3-dehydroquinate synthase, found in Bacillus pumilus (strain SAFR-032).